The sequence spans 668 residues: Alpha-1,4-glucan:maltose-1-phosphate maltosyltransferase (668 aa).

Residues 263 to 288 (RKGRNNSLTPAPDDPGSPYAIGSEEG) form a disordered region. Residues K264, Q324, and D359 each coordinate alpha-maltose 1-phosphate. The Nucleophile role is filled by D395. Position 396 (N396) interacts with alpha-maltose 1-phosphate. The Proton donor role is filled by E424. 535 to 536 (KY) contributes to the alpha-maltose 1-phosphate binding site.

Belongs to the glycosyl hydrolase 13 family. GlgE subfamily. In terms of assembly, homodimer.

It carries out the reaction alpha-maltose 1-phosphate + [(1-&gt;4)-alpha-D-glucosyl](n) = [(1-&gt;4)-alpha-D-glucosyl](n+2) + phosphate. Functionally, maltosyltransferase that uses maltose 1-phosphate (M1P) as the sugar donor to elongate linear or branched alpha-(1-&gt;4)-glucans. Is involved in a branched alpha-glucan biosynthetic pathway from trehalose, together with TreS, Mak and GlgB. The sequence is that of Alpha-1,4-glucan:maltose-1-phosphate maltosyltransferase from Cereibacter sphaeroides (strain ATCC 17023 / DSM 158 / JCM 6121 / CCUG 31486 / LMG 2827 / NBRC 12203 / NCIMB 8253 / ATH 2.4.1.) (Rhodobacter sphaeroides).